The following is an 80-amino-acid chain: MMKPLRQQNRQIISYIPRVEPAPPEHAIKMDTFRDVWILRGKYVAFVLTRESFQRSPAFSVPESAQRWANQVRQENEIAD.

The protein belongs to the CedA family.

Functionally, activates the cell division inhibited by chromosomal DNA over-replication. This Salmonella typhimurium (strain LT2 / SGSC1412 / ATCC 700720) protein is Cell division activator CedA.